A 171-amino-acid chain; its full sequence is Peptide deformylase (171 aa).

Fe cation-binding residues include Cys91 and His133. Glu134 is an active-site residue. His137 lines the Fe cation pocket.

It belongs to the polypeptide deformylase family. It depends on Fe(2+) as a cofactor.

It carries out the reaction N-terminal N-formyl-L-methionyl-[peptide] + H2O = N-terminal L-methionyl-[peptide] + formate. Functionally, removes the formyl group from the N-terminal Met of newly synthesized proteins. Requires at least a dipeptide for an efficient rate of reaction. N-terminal L-methionine is a prerequisite for activity but the enzyme has broad specificity at other positions. The sequence is that of Peptide deformylase from Haemophilus ducreyi (strain 35000HP / ATCC 700724).